The primary structure comprises 99 residues: Large ribosomal subunit protein eL21 (99 aa).

Residues 1–14 (MPNSNGPLSNSGGK) are compositionally biased toward polar residues. The segment at 1–38 (MPNSNGPLSNSGGKLQNDPRDRGTSPPQRAIADYDDGE) is disordered.

This sequence belongs to the eukaryotic ribosomal protein eL21 family.

The polypeptide is Large ribosomal subunit protein eL21 (Halobacterium salinarum (strain ATCC 29341 / DSM 671 / R1)).